The sequence spans 81 residues: Photosystem I iron-sulfur center (81 aa).

4Fe-4S ferredoxin-type domains follow at residues 2-31 (SHSVKIYDTCIGCTQCVRACPTDVLEMIPW) and 39-68 (IASAPRTEDCVGCKRCESACPTDFLSVRVY). Residues Cys11, Cys14, Cys17, Cys21, Cys48, Cys51, Cys54, and Cys58 each coordinate [4Fe-4S] cluster.

As to quaternary structure, the eukaryotic PSI reaction center is composed of at least 11 subunits. It depends on [4Fe-4S] cluster as a cofactor.

The protein localises to the plastid. The protein resides in the chloroplast thylakoid membrane. It catalyses the reaction reduced [plastocyanin] + hnu + oxidized [2Fe-2S]-[ferredoxin] = oxidized [plastocyanin] + reduced [2Fe-2S]-[ferredoxin]. Its function is as follows. Apoprotein for the two 4Fe-4S centers FA and FB of photosystem I (PSI); essential for photochemical activity. FB is the terminal electron acceptor of PSI, donating electrons to ferredoxin. The C-terminus interacts with PsaA/B/D and helps assemble the protein into the PSI complex. Required for binding of PsaD and PsaE to PSI. PSI is a plastocyanin-ferredoxin oxidoreductase, converting photonic excitation into a charge separation, which transfers an electron from the donor P700 chlorophyll pair to the spectroscopically characterized acceptors A0, A1, FX, FA and FB in turn. The sequence is that of Photosystem I iron-sulfur center from Spinacia oleracea (Spinach).